The following is a 2360-amino-acid chain: Protein Ycf2 (2360 aa).

Disordered stretches follow at residues 172-193 (SSQLKGSSDQSRDHFDSIGTED), 225-255 (TEIESDRFSKGLSGSSSKSRLFTEGEKEMNN), and 944-995 (KRKK…KRKE). Low complexity predominate over residues 234 to 244 (KGLSGSSSKSR). The span at 245–254 (LFTEGEKEMN) shows a compositional bias: basic and acidic residues. A compositionally biased stretch (basic residues) spans 944–959 (KRKKKKPEKRKKKKPE). Residues 960 to 993 (KRKEKKPEKRKEKKPEKRKEKKPEKRKEKKPEKR) are compositionally biased toward basic and acidic residues. 1425 to 1432 (GSIGSGRS) serves as a coordination point for ATP. 3 disordered regions span residues 1499 to 1518 (YEDRDSDDYEPGASDDYEPG), 1843 to 2031 (LVGS…LLRP), and 2098 to 2214 (PAEE…DGFS). Over residues 1849–2011 (TEEEVEGTEE…VEGTEDEEVE (163 aa)) the composition is skewed to acidic residues. Positions 2012 to 2024 (GTEKDSSQFDNDR) are enriched in basic and acidic residues. Composition is skewed to acidic residues over residues 2098–2115 (PAEEIPEEEDPLPEEALE) and 2122–2197 (GEEE…ENDS).

Belongs to the Ycf2 family.

It localises to the plastid. It is found in the chloroplast stroma. Probable ATPase of unknown function. Its presence in a non-photosynthetic plant (Epifagus virginiana) and experiments in tobacco indicate that it has an essential function which is probably not related to photosynthesis. This is Protein Ycf2 from Oenothera argillicola (Appalachian evening primrose).